We begin with the raw amino-acid sequence, 172 residues long: uncharacterized protein (172 aa).

Helical transmembrane passes span 16-36, 68-88, and 89-109; these read IMIV…AYLI, SFLI…AGEL, and VISH…YIII.

The protein resides in the cell membrane. This is an uncharacterized protein from Methanocaldococcus jannaschii (strain ATCC 43067 / DSM 2661 / JAL-1 / JCM 10045 / NBRC 100440) (Methanococcus jannaschii).